The following is a 403-amino-acid chain: Flavohemoprotein (403 aa).

The Globin domain occupies 1-138; that stretch reads MLTQKTKDIV…LADVLMGMES (138 aa). Residue His-85 coordinates heme b. Active-site charge relay system residues include Tyr-95 and Glu-137. The tract at residues 149 to 403 is reductase; that stretch reads GGWKGWRTFV…EVFGPDLFAE (255 aa). One can recognise an FAD-binding FR-type domain in the interval 152-262; the sequence is KGWRTFVIRE…AAPYGSFHID (111 aa). Residues Tyr-190 and 206-209 each bind FAD; that span reads RQYS. Position 275 to 280 (275 to 280) interacts with NADP(+); the sequence is GVGLTP. 395–398 contacts FAD; the sequence is VFGP.

The protein belongs to the globin family. Two-domain flavohemoproteins subfamily. In the C-terminal section; belongs to the flavoprotein pyridine nucleotide cytochrome reductase family. Monomer. Requires FAD as cofactor. It depends on heme b as a cofactor.

It is found in the cytoplasm. The enzyme catalyses 2 nitric oxide + NADPH + 2 O2 = 2 nitrate + NADP(+) + H(+). It catalyses the reaction 2 nitric oxide + NADH + 2 O2 = 2 nitrate + NAD(+) + H(+). In terms of biological role, is involved in NO detoxification in an aerobic process, termed nitric oxide dioxygenase (NOD) reaction that utilizes O(2) and NAD(P)H to convert NO to nitrate, which protects the bacterium from various noxious nitrogen compounds. Therefore, plays a central role in the inducible response to nitrosative stress. In the presence of oxygen and NADH, FHP has NADH oxidase activity, which leads to the generation of superoxide and H(2)O(2), both in vitro and in vivo, and it has been suggested that FHP might act as an amplifier of superoxide stress. Under anaerobic conditions, FHP also exhibits nitric oxide reductase and FAD reductase activities. However, all these reactions are much lower than NOD activity. This is Flavohemoprotein (hmp) from Cupriavidus necator (strain ATCC 17699 / DSM 428 / KCTC 22496 / NCIMB 10442 / H16 / Stanier 337) (Ralstonia eutropha).